The following is a 195-amino-acid chain: NADH-quinone oxidoreductase subunit B (195 aa).

Positions 74, 75, 139, and 169 each coordinate [4Fe-4S] cluster.

It belongs to the complex I 20 kDa subunit family. In terms of assembly, NDH-1 is composed of 14 different subunits. Subunits NuoB, C, D, E, F, and G constitute the peripheral sector of the complex. [4Fe-4S] cluster serves as cofactor.

The protein resides in the cell inner membrane. It catalyses the reaction a quinone + NADH + 5 H(+)(in) = a quinol + NAD(+) + 4 H(+)(out). Functionally, NDH-1 shuttles electrons from NADH, via FMN and iron-sulfur (Fe-S) centers, to quinones in the respiratory chain. The immediate electron acceptor for the enzyme in this species is believed to be ubiquinone. Couples the redox reaction to proton translocation (for every two electrons transferred, four hydrogen ions are translocated across the cytoplasmic membrane), and thus conserves the redox energy in a proton gradient. This is NADH-quinone oxidoreductase subunit B from Methylobacterium sp. (strain 4-46).